A 375-amino-acid chain; its full sequence is Alpha-1,2-galactosyltransferase (375 aa).

Over 1-2 (MR) the chain is Cytoplasmic. The helical; Signal-anchor for type II membrane protein transmembrane segment at 3–23 (FAPYLISAVVITTIILGGAWW) threads the bilayer. The Lumenal segment spans residues 24–375 (TSAMDTKLQT…HIQNLLKPSS (352 aa)).

It belongs to the glycosyltransferase 34 family. In terms of processing, O-glycosylated.

The protein localises to the golgi apparatus membrane. Involved in the O- and N-linked oligosaccharide modification of proteins transported through the Golgi stack. This occurs in cis Golgi where the enzyme transfers galactose from UDP-galactose to a variety of mannose based acceptors. This is Alpha-1,2-galactosyltransferase (gma12) from Schizosaccharomyces pombe (strain 972 / ATCC 24843) (Fission yeast).